The chain runs to 304 residues: MSTPPPDAAPTLEPVKPPTAELLIVTGMSGAGRSTAANALEDLGWYVVDNLPPQMLGTLADLASRTPQSLPKLAVVIDVRGKALFNDMKETLAALEHSGVEFSVLFLEASDEVLVSRYELQRRPHPLQAGGRILDGIRAERELLKDLRETADSVLDTTSFNVHALTRAVADMFSTSGPVVLRLTVMSFGFKYGVPADANFVADVRFIPNPHWVPALRPRTGKDPEVRDYVFATDGAQTFVDRFVSMLEPVFAGYRTESKHYATIAIGCTGGKHRSVAITEEVARRLSKSPRVTVNLQHRDMGRE.

27-34 (GMSGAGRS) is a binding site for ATP. 78-81 (DVRG) is a binding site for GTP.

The protein belongs to the RapZ-like family.

Displays ATPase and GTPase activities. This chain is Nucleotide-binding protein KRH_12070, found in Kocuria rhizophila (strain ATCC 9341 / DSM 348 / NBRC 103217 / DC2201).